Reading from the N-terminus, the 129-residue chain is Protein 2B* (129 aa).

2 disordered regions span residues 1–28 and 91–129; these read PFTF…NPTA and DCRD…RNSS. A compositionally biased stretch (polar residues) spans 14–28; that stretch reads DSRSGSVINGSNPTA. The span at 99 to 113 shows a compositional bias: low complexity; the sequence is DASGPLDAALLGSLD. Residues 114 to 129 show a composition bias toward basic and acidic residues; it reads SSRDHKPDKPVRRNSS.

The protein belongs to the encephalomyocarditis virus protein 2B* family.

This is Protein 2B* from Homo sapiens (Human).